Reading from the N-terminus, the 248-residue chain is MATNAKPVYQRILLKLSGEALQGAEGFGIDASVLDRMAQEVKELVELGIQVGVVIGGGNLFRGAGLAQAGMNRVVGDHMGMLATVMNGLAMRDALHRAYVNARLMSAIPLNGVCDNYSWAEAISLLRHNRVVIFAAGTGNPFFTTDSAACLRGIEIEADVVLKATKVDGVYSADPVKNPDATLYEQLTYQDVLERELKVMDLAAFTLARDHNLPIRVFNMNKPGALRRVVMGENEGTLITKEVAAVTK.

Position 15 to 18 (15 to 18 (KLSG)) interacts with ATP. Residues 23-28 (GAEGFG) are involved in allosteric activation by GTP. Residue glycine 57 coordinates UMP. ATP contacts are provided by glycine 58 and arginine 62. Residues aspartate 77 and 138–145 (TGNPFFTT) each bind UMP. Residues threonine 165, tyrosine 171, and aspartate 174 each contribute to the ATP site.

It belongs to the UMP kinase family. As to quaternary structure, homohexamer.

Its subcellular location is the cytoplasm. The catalysed reaction is UMP + ATP = UDP + ADP. The protein operates within pyrimidine metabolism; CTP biosynthesis via de novo pathway; UDP from UMP (UMPK route): step 1/1. Its activity is regulated as follows. Allosterically activated by GTP. Inhibited by UTP. Its function is as follows. Catalyzes the reversible phosphorylation of UMP to UDP. This Yersinia enterocolitica serotype O:8 / biotype 1B (strain NCTC 13174 / 8081) protein is Uridylate kinase.